A 1074-amino-acid chain; its full sequence is Chitin synthase 2 (1074 aa).

3 disordered regions span residues methionine 1 to glycine 32, glutamine 56 to histidine 179, and arginine 209 to asparagine 255. Over residues aspartate 19–alanine 29 the composition is skewed to polar residues. Residues arginine 68–serine 80 are compositionally biased toward low complexity. 2 N-linked (GlcNAc...) asparagine glycosylation sites follow: asparagine 72 and asparagine 97. Over residues alanine 85 to alanine 119 the composition is skewed to polar residues. Positions serine 129 to proline 143 are enriched in low complexity. Asparagine 149 carries an N-linked (GlcNAc...) asparagine glycan. A glycan (N-linked (GlcNAc...) asparagine) is linked at asparagine 289. Helical transmembrane passes span valine 608–leucine 628, leucine 742–leucine 762, glycine 779–valine 799, isoleucine 817–leucine 837, isoleucine 867–glutamate 887, methionine 891–methionine 911, leucine 1001–tryptophan 1021, and isoleucine 1048–leucine 1068.

Belongs to the chitin synthase family. Class II subfamily.

It localises to the cell membrane. The protein localises to the cytoplasmic vesicle membrane. It carries out the reaction [(1-&gt;4)-N-acetyl-beta-D-glucosaminyl](n) + UDP-N-acetyl-alpha-D-glucosamine = [(1-&gt;4)-N-acetyl-beta-D-glucosaminyl](n+1) + UDP + H(+). Polymerizes chitin, a structural polymer of the cell wall and septum, by transferring the sugar moiety of UDP-GlcNAc to the non-reducing end of the growing chitin polymer. This chain is Chitin synthase 2 (CHS2), found in Mycosarcoma maydis (Corn smut fungus).